The sequence spans 1096 residues: Mediator of replication checkpoint protein 1 (1096 aa).

Residues 68–85 (EGKKAPEQNHNNGKDRSE) are compositionally biased toward basic and acidic residues. The tract at residues 68–90 (EGKKAPEQNHNNGKDRSENSLPT) is disordered. Position 144 is a phosphoserine (serine 144). Disordered regions lie at residues 166 to 200 (ALKT…IEPQ), 294 to 316 (IQSE…YKKP), and 336 to 365 (DDSS…LHEN). Polar residues predominate over residues 181-200 (RIDSSGATSQTQPIKSIEPQ). Residues 294–315 (IQSELASEDSKREKARNVEYKK) are compositionally biased toward basic and acidic residues. Acidic residues predominate over residues 336 to 346 (DDSSSNEDDDI). Phosphoserine occurs at positions 409, 411, and 434. Residues 488–542 (QKEVIETKGLKLEDMAKEKEIVENLLEQEILRNKRIRQKEKRREKLEENDFQLNA) adopt a coiled-coil conformation. The tract at residues 527-620 (EKRREKLEEN…VEAKPKEKAD (94 aa)) is disordered. Residues 547 to 560 (SDSGSESSGFALSG) are compositionally biased toward low complexity. Over residues 591-600 (KQKKSHHVKH) the composition is skewed to basic residues. A phosphoserine mark is found at serine 605 and serine 607. Phosphothreonine is present on threonine 609. A compositionally biased stretch (basic and acidic residues) spans 611–620 (VEAKPKEKAD). The stretch at 652–716 (DTQNIEEVMA…IKELKKRGVT (65 aa)) forms a coiled coil. The disordered stretch occupies residues 724–743 (EESEDEWHGIGGADGEGSDD). Phosphoserine occurs at positions 801 and 807. The segment covering 881–898 (DTQDNSINVGDNTGNNEQ) has biased composition (polar residues). The segment at 881–903 (DTQDNSINVGDNTGNNEQKPVDQ) is disordered. The residue at position 911 (serine 911) is a Phosphoserine. The segment at 1058-1096 (RKTEGSHRYHHDHHNKKMKMKTKTKSNKLFESGQDSFDN) is disordered. The span at 1065-1083 (RYHHDHHNKKMKMKTKTKS) shows a compositional bias: basic residues.

Interacts with CDC45 in S phase. Phosphorylated by MEC1 and RAD53.

Its subcellular location is the nucleus. Functionally, required for normal DNA replication. Phosphorylated in response to DNA replication stress. Phosphorylation allows it to mediate the activation of RAD53. This is Mediator of replication checkpoint protein 1 (MRC1) from Saccharomyces cerevisiae (strain ATCC 204508 / S288c) (Baker's yeast).